The chain runs to 212 residues: MKYQLDAREARVIGCMLEKQITTPDQYPMSLNSITTACNQKTNREPVTELSESEVQQTLDLLVKKHFLRTLSGFGNRVVKYEHRFCNSEFGDLKLSPAEVALVTTLLLRGPQTPGELRTRAARLYDFSDVGEAESTLDQLQQRDDGPFVVRLAREAGKRESRYRHLFSGEASDAAVLEEESVNDNSHPLAERVEALETEVAELKRQLAALLA.

This sequence belongs to the UPF0502 family.

The protein is UPF0502 protein ECA2523 of Pectobacterium atrosepticum (strain SCRI 1043 / ATCC BAA-672) (Erwinia carotovora subsp. atroseptica).